The primary structure comprises 308 residues: Zinc-binding protein TroA (308 aa).

A signal peptide spans 1-22 (MIRERICACVLALGMLTGFTHA). His-68, His-133, His-199, and Asp-279 together coordinate Zn(2+).

This sequence belongs to the bacterial solute-binding protein 9 family. Monomer.

It is found in the periplasm. In terms of biological role, part of the ATP-binding cassette (ABC) transport system TroABC involved in zinc import. Binds zinc with high affinity and specificity and delivers it to the membrane permease for translocation into the cytoplasm. This is Zinc-binding protein TroA (troA) from Treponema pallidum (strain Nichols).